Here is a 376-residue protein sequence, read N- to C-terminus: Alkanesulfonate monooxygenase (376 aa).

This sequence belongs to the SsuD family.

It catalyses the reaction an alkanesulfonate + FMNH2 + O2 = an aldehyde + FMN + sulfite + H2O + 2 H(+). In terms of biological role, catalyzes the desulfonation of aliphatic sulfonates. The polypeptide is Alkanesulfonate monooxygenase (Bacillus licheniformis (strain ATCC 14580 / DSM 13 / JCM 2505 / CCUG 7422 / NBRC 12200 / NCIMB 9375 / NCTC 10341 / NRRL NRS-1264 / Gibson 46)).